The sequence spans 435 residues: MSAKSNKIGVVQLTILTMVNMMGSGIIMLPTKLAEIGTISIVSWLVTAVGSTALAYAFAQCGMFSKKSGGMGGYAEYSFGKAGNFMANYTYGVSLVIANTAIAISAVGYGSELFGTILSPLSIALWTIFTLWLATVLNFGGARITGNISSFTIWGVIIPVVGISIIGWKWFDGSMYVNSWNPHNVPTFEAIGVSISMTLWAFLGLESACANADAVENPEKNVPIAVLGGTLGAAVIYIVSTNVIAGIVPNLELANSTAPFGLAFAHMFDETVGKVIMGLMVMSCFGSLLGWQFTIAQVFKSSAEEGYFPAFFKKITSKDAPVVGMITITALQTLLSLMTISPSLNKQFNVLVDLAVVTNVIPYLLSMAALAVLLKAENVAPQKYKTTVFVAFIGSLYSIYALYAAGEQAMLYGSIVTFIGWTLYGFVSYKFDLKK.

The next 12 helical transmembrane spans lie at 8-28 (IGVV…GIIM), 39-59 (ISIV…YAFA), 95-115 (LVIA…ELFG), 117-137 (ILSP…ATVL), 148-168 (ISSF…IIGW), 185-205 (VPTF…FLGL), 224-244 (IAVL…TNVI), 275-295 (VIMG…QFTI), 320-340 (APVV…LMTI), 354-374 (LAVV…AVLL), 386-406 (TTVF…YAAG), and 409-429 (AMLY…FVSY).

This sequence belongs to the amino acid-polyamine-organocation (APC) superfamily. Basic amino acid/polyamine antiporter (APA) (TC 2.A.3.2) family.

It localises to the cell inner membrane. The enzyme catalyses putrescine(in) + H(+)(in) = putrescine(out) + H(+)(out). It catalyses the reaction putrescine(in) + L-ornithine(out) = putrescine(out) + L-ornithine(in). Catalyzes both the uptake and excretion of putrescine. The uptake of putrescine is dependent on the membrane potential and the excretion involves putrescine-ornithine antiporter activity. This is Putrescine transporter PotE from Haemophilus influenzae (strain ATCC 51907 / DSM 11121 / KW20 / Rd).